The following is a 305-amino-acid chain: MTDRIAAVKTYLLDLQDRICAALEAEDGKARFAEDAWERPAGGGGRTRVIGDGALIEKGGVNFSHVFGDSLPPSASAHRPELAGRGFQALGVSLVIHPENPHVPTSHANVRFFCAEKAGEEPVWWFGGGFDLTPYYASEEDCVHWHRVARDACAPFGADVYPRYKEWCDRYFHLKHRNEPRGIGGLFFDDLNQWDFDTCFAFIRAIGDAYIDAYLPIVQRRKHTPFDERQREFQAYRRGRYVEFNLVFDRGTLFGLQSGGRTESILMSLPPQVRWGYDWKPEPGSEEARLTEYFLTDRDWLAGQP.

Residue Ser-93 coordinates substrate. Residues His-97 and His-107 each coordinate a divalent metal cation. The Proton donor role is filled by His-107. 109–111 (NVR) lines the substrate pocket. A divalent metal cation is bound by residues His-146 and His-176. An important for dimerization region spans residues 241-276 (YVEFNLVFDRGTLFGLQSGGRTESILMSLPPQVRWG). A substrate-binding site is contributed by 259-261 (GGR).

Belongs to the aerobic coproporphyrinogen-III oxidase family. Homodimer. The cofactor is a divalent metal cation.

The protein resides in the cytoplasm. The enzyme catalyses coproporphyrinogen III + O2 + 2 H(+) = protoporphyrinogen IX + 2 CO2 + 2 H2O. Its pathway is porphyrin-containing compound metabolism; protoporphyrin-IX biosynthesis; protoporphyrinogen-IX from coproporphyrinogen-III (O2 route): step 1/1. In terms of biological role, involved in the heme biosynthesis. Catalyzes the aerobic oxidative decarboxylation of propionate groups of rings A and B of coproporphyrinogen-III to yield the vinyl groups in protoporphyrinogen-IX. The chain is Oxygen-dependent coproporphyrinogen-III oxidase from Pseudomonas paraeruginosa (strain DSM 24068 / PA7) (Pseudomonas aeruginosa (strain PA7)).